Consider the following 234-residue polypeptide: Sugar fermentation stimulation protein A (234 aa).

Residues 201–220 (LLSEAQQRGVEILAYKAEIS) constitute a DNA-binding region (H-T-H motif).

This sequence belongs to the SfsA family.

In terms of biological role, binds to DNA non-specifically. Could be a regulatory factor involved in maltose metabolism. This Shigella flexneri serotype 5b (strain 8401) protein is Sugar fermentation stimulation protein A.